Consider the following 198-residue polypeptide: MLYPTPIAKLIDSYSKLPGIGIKTATRLAFYTIGMSDDDVNEFAKNLLSAKRELTYCSVCGRLTDDDPCSICTDPTRDQTTILVLEDSRDVAAMENIQEYHGLYHVLHGLISPMNGISPDDINLKSLMTRLMDSEVSEVIVATNATADGEATSMYLSRLLKPAGIKVTRLARGLAVGADIEYADEVTLLRAIENRTEL.

The segment at 57–72 (CSVCGRLTDDDPCSIC) adopts a C4-type zinc-finger fold. The region spanning 80–175 (TTILVLEDSR…KVTRLARGLA (96 aa)) is the Toprim domain.

It belongs to the RecR family.

In terms of biological role, may play a role in DNA repair. It seems to be involved in an RecBC-independent recombinational process of DNA repair. It may act with RecF and RecO. The protein is Recombination protein RecR of Streptococcus pneumoniae (strain Hungary19A-6).